The following is a 29-amino-acid chain: Potassium channel toxin alpha-KTx 8.3 (29 aa).

3 disulfides stabilise this stretch: Cys3/Cys19, Cys6/Cys24, and Cys10/Cys26.

It belongs to the short scorpion toxin superfamily. Potassium channel inhibitor family. Alpha-KTx 08 subfamily. Expressed by the venom gland.

The protein resides in the secreted. Specific and potent inhibitor of ClC-2/CLCN2 chloride channel. It slows ClC-2/CLCN2 activation by increasing the latency to first opening by nearly 8-fold but is unable to inhibit open channels, suggesting that this toxin inhibits channel activation gating. The polypeptide is Potassium channel toxin alpha-KTx 8.3 (Leiurus hebraeus (Hebrew deathstalker scorpion)).